The primary structure comprises 168 residues: 2-C-methyl-D-erythritol 2,4-cyclodiphosphate synthase (168 aa).

A divalent metal cation contacts are provided by Asp11 and His13. Residues 11-13 (DVH) and 41-42 (HS) contribute to the 4-CDP-2-C-methyl-D-erythritol 2-phosphate site. A divalent metal cation is bound at residue His49. 4-CDP-2-C-methyl-D-erythritol 2-phosphate contacts are provided by residues 63–65 (DIG), 68–72 (FPDTD), 139–142 (TTTE), Phe146, and Arg149.

It belongs to the IspF family. In terms of assembly, homotrimer. The cofactor is a divalent metal cation.

It carries out the reaction 4-CDP-2-C-methyl-D-erythritol 2-phosphate = 2-C-methyl-D-erythritol 2,4-cyclic diphosphate + CMP. It functions in the pathway isoprenoid biosynthesis; isopentenyl diphosphate biosynthesis via DXP pathway; isopentenyl diphosphate from 1-deoxy-D-xylulose 5-phosphate: step 4/6. Functionally, involved in the biosynthesis of isopentenyl diphosphate (IPP) and dimethylallyl diphosphate (DMAPP), two major building blocks of isoprenoid compounds. Catalyzes the conversion of 4-diphosphocytidyl-2-C-methyl-D-erythritol 2-phosphate (CDP-ME2P) to 2-C-methyl-D-erythritol 2,4-cyclodiphosphate (ME-CPP) with a corresponding release of cytidine 5-monophosphate (CMP). The polypeptide is 2-C-methyl-D-erythritol 2,4-cyclodiphosphate synthase (Psychrobacter arcticus (strain DSM 17307 / VKM B-2377 / 273-4)).